A 230-amino-acid chain; its full sequence is Thioredoxin domain-containing protein PLP3B (230 aa).

The Thioredoxin domain maps to 89–173 (VSEGDFLGEV…GIAMDRLVGF (85 aa)). Residues 199-230 (EKRKEEDEEDYEYQESIRRSVRSSANVDSDSD) are disordered. Polar residues predominate over residues 220 to 230 (RSSANVDSDSD).

This sequence belongs to the phosducin family. Interacts with TUBB2, TUBB3, TUBB4 and TUBB5. In terms of tissue distribution, expressed in roots, cotyledons, leaves, stems and flowers.

It localises to the cytoplasm. The protein localises to the nucleus. Functionally, tubulin-binding protein involved in microtubule formation. This Arabidopsis thaliana (Mouse-ear cress) protein is Thioredoxin domain-containing protein PLP3B (PLP3B).